A 428-amino-acid chain; its full sequence is Cysteine--tRNA ligase (428 aa).

Residue cysteine 23 participates in Zn(2+) binding. The short motif at proline 25 to asparagine 35 is the 'HIGH' region element. Positions 196, 221, and 225 each coordinate Zn(2+). Residues lysine 253 to serine 257 carry the 'KMSKS' region motif. Lysine 256 contributes to the ATP binding site.

The protein belongs to the class-I aminoacyl-tRNA synthetase family. In terms of assembly, monomer. Zn(2+) serves as cofactor.

It localises to the cytoplasm. The enzyme catalyses tRNA(Cys) + L-cysteine + ATP = L-cysteinyl-tRNA(Cys) + AMP + diphosphate. In Mycoplasma genitalium (strain ATCC 33530 / DSM 19775 / NCTC 10195 / G37) (Mycoplasmoides genitalium), this protein is Cysteine--tRNA ligase (cysS).